The following is a 451-amino-acid chain: uncharacterized protein (451 aa).

Positions 1–59 (MLHKNDIIETEISDISHEGMGIAKVDGFVFFVENALPGEIIKMRVLKLRKRIGYGKVEE) constitute a TRAM domain. Residues Gln283, Tyr312, Glu333, and Asp381 each contribute to the S-adenosyl-L-methionine site. Cys408 acts as the Nucleophile in catalysis.

Belongs to the class I-like SAM-binding methyltransferase superfamily. RNA M5U methyltransferase family.

This is an uncharacterized protein from Streptococcus agalactiae serotype V (strain ATCC BAA-611 / 2603 V/R).